A 654-amino-acid polypeptide reads, in one-letter code: Acetyl-coenzyme A synthetase (654 aa).

Residues 196-199 (RGGK) and T316 each bind CoA. ATP-binding positions include 392–394 (GEP), 416–421 (DTWWQT), D506, and R521. Position 529 (S529) interacts with CoA. R532 is a binding site for ATP. Residues V543 and V548 each contribute to the Mg(2+) site. N6-acetyllysine is present on K618.

Belongs to the ATP-dependent AMP-binding enzyme family. The cofactor is Mg(2+). Acetylated. Deacetylation by the SIR2-homolog deacetylase activates the enzyme.

The enzyme catalyses acetate + ATP + CoA = acetyl-CoA + AMP + diphosphate. Functionally, catalyzes the conversion of acetate into acetyl-CoA (AcCoA), an essential intermediate at the junction of anabolic and catabolic pathways. AcsA undergoes a two-step reaction. In the first half reaction, AcsA combines acetate with ATP to form acetyl-adenylate (AcAMP) intermediate. In the second half reaction, it can then transfer the acetyl group from AcAMP to the sulfhydryl group of CoA, forming the product AcCoA. The chain is Acetyl-coenzyme A synthetase from Methylobacillus flagellatus (strain ATCC 51484 / DSM 6875 / VKM B-1610 / KT).